The following is a 440-amino-acid chain: Inner membrane metabolite transport protein YhjE (440 aa).

At 1–34 (MQATATTLDHEQEYTPINSRNKVLVASLIGTAIE) the chain is on the cytoplasmic side. The chain crosses the membrane as a helical span at residues 35–55 (FFDFYIYATAAVIVFPHIFFP). Residues 56–66 (QGDPTAATLQS) lie on the Periplasmic side of the membrane. Residues 67-87 (LATFAIAFVARPIGSAVFGHF) form a helical membrane-spanning segment. The Cytoplasmic portion of the chain corresponds to 88–108 (GDRVGRKATLVASLLTMGIST). The next 2 membrane-spanning stretches (helical) occupy residues 109-129 (VVIG…LLLA) and 130-150 (LARF…ALLA). At 151 to 167 (TENAPPRKRALYGSFPQ) the chain is on the cytoplasmic side. Residues 168–188 (LGAPIGFFFANGTFLLLSWLL) traverse the membrane as a helical segment. Over 189–192 (TDEQ) the chain is Periplasmic. Residues 193–213 (FMSWGWRVPFIFSAVLVIIGL) traverse the membrane as a helical segment. The Cytoplasmic segment spans residues 214–248 (YVRVSLHESPVFEKVAKAKKQVKIPLGTLLTKHVR). The helical transmembrane segment at 249–269 (VTVLGTFIMLATYTLFYIMTV) threads the bilayer. Residues 270–289 (YSMTFSTAAAPVGLGLPRNE) are Periplasmic-facing. Residues 290–310 (VLWMLMMAVIGFGVMVPVAGL) traverse the membrane as a helical segment. Topologically, residues 311-320 (LADAFGRRKS) are cytoplasmic. Residues 321 to 341 (MVIITTLIILFALFAFNPLLG) form a helical membrane-spanning segment. At 342 to 345 (SGNP) the chain is on the periplasmic side. Residues 346 to 366 (ILVFAFLLLGLSLMGLTFGPM) traverse the membrane as a helical segment. Over 367-384 (GALLPELFPTEVRYTGAS) the chain is Cytoplasmic. The helical transmembrane segment at 385–405 (FSYNVASILGASVAPYIAAWL) threads the bilayer. The Periplasmic portion of the chain corresponds to 406–410 (QTNYG). The chain crosses the membrane as a helical span at residues 411–431 (LGAVGLYLAAMAGLTLIALLL). The Cytoplasmic portion of the chain corresponds to 432-440 (THETRHQSL).

This sequence belongs to the major facilitator superfamily. Metabolite:H+ Symporter (MHS) family (TC 2.A.1.6) family.

The protein localises to the cell inner membrane. This chain is Inner membrane metabolite transport protein YhjE (yhjE), found in Escherichia coli (strain K12).